The sequence spans 245 residues: 3-deoxy-manno-octulosonate cytidylyltransferase (245 aa).

This sequence belongs to the KdsB family.

It is found in the cytoplasm. The enzyme catalyses 3-deoxy-alpha-D-manno-oct-2-ulosonate + CTP = CMP-3-deoxy-beta-D-manno-octulosonate + diphosphate. Its pathway is nucleotide-sugar biosynthesis; CMP-3-deoxy-D-manno-octulosonate biosynthesis; CMP-3-deoxy-D-manno-octulosonate from 3-deoxy-D-manno-octulosonate and CTP: step 1/1. It functions in the pathway bacterial outer membrane biogenesis; lipopolysaccharide biosynthesis. In terms of biological role, activates KDO (a required 8-carbon sugar) for incorporation into bacterial lipopolysaccharide in Gram-negative bacteria. The protein is 3-deoxy-manno-octulosonate cytidylyltransferase of Acaryochloris marina (strain MBIC 11017).